The chain runs to 233 residues: tRNA (guanine-N(7)-)-methyltransferase (233 aa).

The interval 1–21 (MTEESHPLRGAGNFFGRRHGK) is disordered. S-adenosyl-L-methionine is bound by residues Glu64, Glu89, Asp116, and Asp138. Asp138 is an active-site residue. Residues Lys142, Asp174, and 212–215 (TRYE) each bind substrate.

It belongs to the class I-like SAM-binding methyltransferase superfamily. TrmB family.

The catalysed reaction is guanosine(46) in tRNA + S-adenosyl-L-methionine = N(7)-methylguanosine(46) in tRNA + S-adenosyl-L-homocysteine. The protein operates within tRNA modification; N(7)-methylguanine-tRNA biosynthesis. Functionally, catalyzes the formation of N(7)-methylguanine at position 46 (m7G46) in tRNA. The chain is tRNA (guanine-N(7)-)-methyltransferase from Brucella anthropi (strain ATCC 49188 / DSM 6882 / CCUG 24695 / JCM 21032 / LMG 3331 / NBRC 15819 / NCTC 12168 / Alc 37) (Ochrobactrum anthropi).